Consider the following 422-residue polypeptide: Lipoyl synthase, mitochondrial (422 aa).

Residues 1-34 (MAASSTRLRCLYASSAPAWKKSPSQSIISLSRHY) constitute a mitochondrion transit peptide. The span at 37 to 48 (TSSTTPSLNPDE) shows a compositional bias: polar residues. The disordered stretch occupies residues 37 to 70 (TSSTTPSLNPDESSSSSSSTIPKRRKTTTFRDKL). The [4Fe-4S] cluster site is built by Cys-146, Cys-151, Cys-157, Cys-177, Cys-181, Cys-184, and Ser-383. In terms of domain architecture, Radical SAM core spans 160–372 (GSDKSAATAT…RQRALEMGFL (213 aa)).

The protein belongs to the radical SAM superfamily. Lipoyl synthase family. [4Fe-4S] cluster serves as cofactor.

It is found in the mitochondrion. The catalysed reaction is [[Fe-S] cluster scaffold protein carrying a second [4Fe-4S](2+) cluster] + N(6)-octanoyl-L-lysyl-[protein] + 2 oxidized [2Fe-2S]-[ferredoxin] + 2 S-adenosyl-L-methionine + 4 H(+) = [[Fe-S] cluster scaffold protein] + N(6)-[(R)-dihydrolipoyl]-L-lysyl-[protein] + 4 Fe(3+) + 2 hydrogen sulfide + 2 5'-deoxyadenosine + 2 L-methionine + 2 reduced [2Fe-2S]-[ferredoxin]. It participates in protein modification; protein lipoylation via endogenous pathway; protein N(6)-(lipoyl)lysine from octanoyl-[acyl-carrier-protein]: step 2/2. In terms of biological role, catalyzes the radical-mediated insertion of two sulfur atoms into the C-6 and C-8 positions of the octanoyl moiety bound to the lipoyl domains of lipoate-dependent enzymes, thereby converting the octanoylated domains into lipoylated derivatives. The sequence is that of Lipoyl synthase, mitochondrial from Talaromyces stipitatus (strain ATCC 10500 / CBS 375.48 / QM 6759 / NRRL 1006) (Penicillium stipitatum).